A 623-amino-acid chain; its full sequence is MPPPQGDVTALFLGPPGLGKSALIAALCDKDVETLEAPEGRPDSGVPSLRAAGPGLFLGELSCPPAAPGPWAAEANVLVLVLPGPEGNGEPLAPALGEAALAALARGTPLLAVRNLRPGDSQTAAQARDQTAALLNSAGLGAADLFVLPANCGSSDGCEELERLRAALQSQAEALRRLLPPAQDGFEVLGAAELEAVREAFETGGLEAALSWVRSGLERLGSARLDLAVAGKADVGLVVDMLLGLDPGDPGAAPASVPTAPTPFPAPERPNVVLWTVPLGHTGTATTAAAASHPTHYDALILVTPGAPTEKDWAQVQALLLPDAPLVCVRTDGEGEDPECLGEGKMENPKGESLKNAGGGGLENALSKGREKCSAGSQKAGSGEGPGKAGSEGLQQVVGMKKSGGGDSERAAALSPEDETWEVLEEAPPPVFPLRPGGLPGLCEWLRRALPPAQAGALLLALPPASPSAARTKAAALRAGAWRPALLASLAAAAAPLPGLGWACDVALLRGQLAEWRRGLGLEPTALARRERALGLASGELAARAHFPGPVTRAEVEARLGAWAGEGTAGGAALGALSFLWPAGGAAATGGLGYRAAHGVLLQALDEMRADAEAVLAPPEPAQ.

The cysteines at positions 152 and 158 are disulfide-linked. Residues 155-180 (SDGCEELERLRAALQSQAEALRRLLP) adopt a coiled-coil conformation. Residues 186–189 (FEVL) carry the LIR 1 motif. Residue Thr-203 is modified to Phosphothreonine. The 227-residue stretch at 223–449 (ARLDLAVAGK…PGLCEWLRRA (227 aa)) folds into the IRG-type G domain. Residues 334-393 (EGEDPECLGEGKMENPKGESLKNAGGGGLENALSKGREKCSAGSQKAGSGEGPGKAGSEG) are disordered. Positions 342–353 (GEGKMENPKGES) are enriched in basic and acidic residues. The LIR 2 motif lies at 421-424 (WEVL).

The protein belongs to the TRAFAC class dynamin-like GTPase superfamily. IRG family. As to quaternary structure, interacts (via LIR motif 1) with GABARAPL2. Interacts (via LIR motif 2) with MAP1LC3B/LC3B.

It localises to the lysosome. Its subcellular location is the cytoplasmic vesicle. The protein resides in the autophagosome. Functionally, autophagy receptor that specifically promotes clearance of misfolded MHC class I molecules by targeting them to the lysosome for degradation. Acts as a molecular adapter that specifically recognizes and binds (1) misfolded MHC class I molecules following their ubiquitination, as well as (2) autophagy-related proteins, promoting the recruitment of misfolded MHC class I molecules to autophagy machinery for degradation. Degradation of misfolded MHC class I molecules is essential to prevent accumulation of defective MHC class I complexes at the surface of CD8(+) T-cells and prevent a stronger T-cell-mediated response. In contrast to other members of the family, does not show GTPase activity. This chain is Immunity-related GTPase family Q protein, found in Homo sapiens (Human).